We begin with the raw amino-acid sequence, 263 residues long: Proteasome subunit beta type-5 (263 aa).

Residues Met1–Gly59 constitute a propeptide, removed in mature form. Thr60 serves as the catalytic Nucleophile. Ala108 serves as a coordination point for bortezomib.

It belongs to the peptidase T1B family. The 26S proteasome consists of a 20S proteasome core and two 19S regulatory subunits. The 20S proteasome core is a barrel-shaped complex made of 28 subunits that are arranged in four stacked rings. The two outer rings are each formed by seven alpha subunits, and the two inner rings are formed by seven beta subunits. The proteolytic activity is exerted by three beta-subunits PSMB5, PSMB6 and PSMB7. Directly interacts with POMP. Interacts with ABCB1 and TAP1. As to quaternary structure, (Microbial infection) Interacts with HIV-1 TAT protein.

It localises to the cytoplasm. It is found in the nucleus. The enzyme catalyses Cleavage of peptide bonds with very broad specificity.. Component of the 20S core proteasome complex involved in the proteolytic degradation of most intracellular proteins. This complex plays numerous essential roles within the cell by associating with different regulatory particles. Associated with two 19S regulatory particles, forms the 26S proteasome and thus participates in the ATP-dependent degradation of ubiquitinated proteins. The 26S proteasome plays a key role in the maintenance of protein homeostasis by removing misfolded or damaged proteins that could impair cellular functions, and by removing proteins whose functions are no longer required. Associated with the PA200 or PA28, the 20S proteasome mediates ubiquitin-independent protein degradation. This type of proteolysis is required in several pathways including spermatogenesis (20S-PA200 complex) or generation of a subset of MHC class I-presented antigenic peptides (20S-PA28 complex). Within the 20S core complex, PSMB5 displays a chymotrypsin-like activity. The polypeptide is Proteasome subunit beta type-5 (Homo sapiens (Human)).